Reading from the N-terminus, the 583-residue chain is Long-chain-fatty-acid--AMP ligase FadD26 (583 aa).

It belongs to the ATP-dependent AMP-binding enzyme family.

The enzyme catalyses holo-[(phenol)carboxyphthiodiolenone synthase] + a long-chain fatty acid + ATP = a long-chain fatty acyl-[(phenol)carboxyphthiodiolenone synthase] + AMP + diphosphate. It carries out the reaction eicosanoate + holo-[(phenol)carboxyphthiodiolenone synthase] + ATP = icosanoyl-[(phenol)carboxyphthiodiolenone synthase] + AMP + diphosphate. The catalysed reaction is holo-[(phenol)carboxyphthiodiolenone synthase] + docosanoate + ATP = docosanoyl-[(phenol)carboxyphthiodiolenone synthase] + AMP + diphosphate. It participates in lipid metabolism; fatty acid biosynthesis. In terms of biological role, catalyzes the activation of long-chain fatty acids as acyl-adenylates (acyl-AMP), which are then transferred to the multifunctional polyketide synthase PpsA for further chain extension. Catalyzes the adenylation of the long-chain fatty acids eicosanoate (C20) or docosanoate (C22), and potentially the very-long-chain fatty acid lignocerate (C24). Involved in the biosynthesis of phthiocerol dimycocerosate (DIM A) and phthiodiolone dimycocerosate (DIM B). In Mycobacterium tuberculosis (strain CDC 1551 / Oshkosh), this protein is Long-chain-fatty-acid--AMP ligase FadD26 (fadD26).